Reading from the N-terminus, the 286-residue chain is Ferric acinetobactin reductase (286 aa).

In terms of domain architecture, FAD-binding FR-type spans 25–131 (MEQLEMTIVS…IGPRPHFIPN (107 aa)). Arg79, Val80, Thr82, Asp96, Val98, His100, Asp102, Ser104, Ala106, Arg250, Gly252, and Ser255 together coordinate FAD.

This sequence belongs to the SIP oxidoreductase family. Monomer in solution. FAD serves as cofactor.

It catalyses the reaction 2 a Fe(II)-siderophore + NAD(+) + H(+) = 2 a Fe(III)-siderophore + NADH. It carries out the reaction 2 a Fe(II)-siderophore + NADP(+) + H(+) = 2 a Fe(III)-siderophore + NADPH. Its function is as follows. Ferric-siderophore reductase involved in iron removal from the siderophores after their transport into the cell. Interacts with the siderophores acinetobactin (Acb) and preacinetobactin (pre-Acb) and catalyzes the reduction of the ferric iron bound to the siderophores to ferrous iron, resulting in destabilization of the siderophore chelation complex and entrance of ferrous iron into the intracellular pool of bioavailable metals. Can use NADH and NADPH as electron donors in vitro, but the reduction rate is very slow, suggesting that NADH and NADPH are not the physiological partners of BauF. In Acinetobacter baumannii, this protein is Ferric acinetobactin reductase.